Consider the following 778-residue polypeptide: Exo-beta-D-glucosaminidase (778 aa).

Residues Tyr55, Gly104–Glu105, Asp180–Glu181, Glu308, Glu349, and Tyr381 contribute to the substrate site. The active-site Proton donor is Glu181. Catalysis depends on Glu349, which acts as the Nucleophile.

Belongs to the glycosyl hydrolase 35 family. As to quaternary structure, homodimer.

It localises to the cytoplasm. The enzyme catalyses beta-D-glucosaminyl-(1-&gt;4)-N-acetyl-D-glucosamine + H2O = D-glucosamine + N-acetyl-D-glucosamine. The protein operates within glycan degradation; chitin degradation. In terms of biological role, exo-type enzyme that specifically cleaves the non-reducing terminal glycosidic bond of chitooligosaccharides. Catalyzes the hydrolysis of GlcN-GlcNAc to glucosamine (GlcN) and N-acetylglucosamine (GlcNAc). Involved in chitin degradation. Can also hydrolyze chitosan and chitooligosaccharides of various chain lengths. The sequence is that of Exo-beta-D-glucosaminidase from Pyrococcus horikoshii (strain ATCC 700860 / DSM 12428 / JCM 9974 / NBRC 100139 / OT-3).